Reading from the N-terminus, the 484-residue chain is tRNA sulfurtransferase (484 aa).

Residues 63–167 form the THUMP domain; the sequence is EAFAERLACI…KESLYLVSKR (105 aa). ATP is bound by residues 185-186, Lys267, Gly289, and Gln298; that span reads LI. A disulfide bridge connects residues Cys346 and Cys458. One can recognise a Rhodanese domain in the interval 406-484; sequence INSGEVIIDV…GYDNVKVYRP (79 aa). The active-site Cysteine persulfide intermediate is the Cys458.

This sequence belongs to the ThiI family.

The protein localises to the cytoplasm. It carries out the reaction [ThiI sulfur-carrier protein]-S-sulfanyl-L-cysteine + a uridine in tRNA + 2 reduced [2Fe-2S]-[ferredoxin] + ATP + H(+) = [ThiI sulfur-carrier protein]-L-cysteine + a 4-thiouridine in tRNA + 2 oxidized [2Fe-2S]-[ferredoxin] + AMP + diphosphate. The catalysed reaction is [ThiS sulfur-carrier protein]-C-terminal Gly-Gly-AMP + S-sulfanyl-L-cysteinyl-[cysteine desulfurase] + AH2 = [ThiS sulfur-carrier protein]-C-terminal-Gly-aminoethanethioate + L-cysteinyl-[cysteine desulfurase] + A + AMP + 2 H(+). The protein operates within cofactor biosynthesis; thiamine diphosphate biosynthesis. Functionally, catalyzes the ATP-dependent transfer of a sulfur to tRNA to produce 4-thiouridine in position 8 of tRNAs, which functions as a near-UV photosensor. Also catalyzes the transfer of sulfur to the sulfur carrier protein ThiS, forming ThiS-thiocarboxylate. This is a step in the synthesis of thiazole, in the thiamine biosynthesis pathway. The sulfur is donated as persulfide by IscS. The chain is tRNA sulfurtransferase from Shewanella woodyi (strain ATCC 51908 / MS32).